The following is a 297-amino-acid chain: Phosphoribosylaminoimidazole-succinocarboxamide synthase (297 aa).

The protein belongs to the SAICAR synthetase family.

The enzyme catalyses 5-amino-1-(5-phospho-D-ribosyl)imidazole-4-carboxylate + L-aspartate + ATP = (2S)-2-[5-amino-1-(5-phospho-beta-D-ribosyl)imidazole-4-carboxamido]succinate + ADP + phosphate + 2 H(+). It functions in the pathway purine metabolism; IMP biosynthesis via de novo pathway; 5-amino-1-(5-phospho-D-ribosyl)imidazole-4-carboxamide from 5-amino-1-(5-phospho-D-ribosyl)imidazole-4-carboxylate: step 1/2. The protein is Phosphoribosylaminoimidazole-succinocarboxamide synthase (purC) of Mycobacterium leprae (strain TN).